Consider the following 748-residue polypeptide: Histone-lysine N-methyltransferase EZH2 (748 aa).

The span at 183–199 shows a compositional bias: acidic residues; sequence DYEDDEDGEDNQDDERD. Disordered stretches follow at residues 183 to 215 and 347 to 428; these read DYED…KETL and TPPK…NIEP. Residues 200 to 215 show a composition bias toward basic and acidic residues; it reads DITKDQDDNMEEKETL. The span at 348 to 359 shows a compositional bias: basic residues; that stretch reads PPKRPSGRRRGR. Basic and acidic residues predominate over residues 376–387; that stretch reads EAKDTDSDREAG. The CXC domain occupies 505–607; the sequence is CRKIQLKKDG…SKNVSCKNCS (103 aa). Residues 614 to 729 form the SET domain; sequence KHLLLAPSDV…TGEELFFDYR (116 aa).

It belongs to the class V-like SAM-binding methyltransferase superfamily. Histone-lysine methyltransferase family. EZ subfamily. Component of the prc2/eed-ezh2 complex.

The protein localises to the nucleus. It catalyses the reaction L-lysyl(27)-[histone H3] + 3 S-adenosyl-L-methionine = N(6),N(6),N(6)-trimethyl-L-lysyl(27)-[histone H3] + 3 S-adenosyl-L-homocysteine + 3 H(+). Functionally, polycomb group (PcG) protein. Catalytic subunit of the prc2/eed-ezh2 complex, which methylates 'Lys-9' and 'Lys-27' of histone H3, leading to transcriptional repression of the affected target gene. May regulate the circadian clock via histone methylation at the promoter of the circadian genes. The chain is Histone-lysine N-methyltransferase EZH2 (ezh2-b) from Xenopus laevis (African clawed frog).